The sequence spans 265 residues: Undecaprenyl-diphosphatase (265 aa).

8 helical membrane passes run 15–37, 41–61, 85–105, 109–129, 144–164, 183–203, 218–238, and 244–264; these read GLTEFLPVSSTGHLIITGYLLEY, KAESFQVAIQLGAILAVVFLY, YLLALTSAPASVLGLLTHSFI, LFGPVTVAWALAAGALYILAV, VSPALALGIGMFQCLALWPGF, LAAEYSFVAAVPIMFAATGYD, FWAVGLLVSFASAWAAVKGFI, and VTFRPFAWYRLALAPVVLLFW.

It belongs to the UppP family.

It is found in the cell inner membrane. It catalyses the reaction di-trans,octa-cis-undecaprenyl diphosphate + H2O = di-trans,octa-cis-undecaprenyl phosphate + phosphate + H(+). Functionally, catalyzes the dephosphorylation of undecaprenyl diphosphate (UPP). Confers resistance to bacitracin. The polypeptide is Undecaprenyl-diphosphatase (Oleidesulfovibrio alaskensis (strain ATCC BAA-1058 / DSM 17464 / G20) (Desulfovibrio alaskensis)).